The sequence spans 255 residues: PHD finger protein ALFIN-LIKE 4 (255 aa).

M1 is subject to N-acetylmethionine. The tract at residues 145–200 is disordered; the sequence is GKDKSSVSNNSSNRSKSSSKRGSESRAKFSKPEPKDDEEEEEEGVEEEDEDEQGET. Residues 150–160 are compositionally biased toward low complexity; it reads SVSNNSSNRSK. Over residues 165 to 178 the composition is skewed to basic and acidic residues; sequence RGSESRAKFSKPEP. Acidic residues predominate over residues 179–198; sequence KDDEEEEEEGVEEEDEDEQG. A PHD-type zinc finger spans residues 199–251; the sequence is ETQCGACGESYAADEFWICCDLCEMWFHGKCVKITPARAEHIKQYKCPSCSNK.

The protein belongs to the Alfin family. Interacts with H3K4me3 and to a lesser extent with H3K4me2. As to expression, ubiquitously expressed.

It is found in the nucleus. In terms of biological role, histone-binding component that specifically recognizes H3 tails trimethylated on 'Lys-4' (H3K4me3), which mark transcription start sites of virtually all active genes. The protein is PHD finger protein ALFIN-LIKE 4 (AL4) of Arabidopsis thaliana (Mouse-ear cress).